We begin with the raw amino-acid sequence, 715 residues long: Ribosomal RNA large subunit methyltransferase K/L (715 aa).

A THUMP domain is found at 47–158 (LGYKISLWTR…RDNVTIFLDF (112 aa)).

The protein belongs to the methyltransferase superfamily. RlmKL family.

It localises to the cytoplasm. The enzyme catalyses guanosine(2445) in 23S rRNA + S-adenosyl-L-methionine = N(2)-methylguanosine(2445) in 23S rRNA + S-adenosyl-L-homocysteine + H(+). It carries out the reaction guanosine(2069) in 23S rRNA + S-adenosyl-L-methionine = N(2)-methylguanosine(2069) in 23S rRNA + S-adenosyl-L-homocysteine + H(+). Its function is as follows. Specifically methylates the guanine in position 2445 (m2G2445) and the guanine in position 2069 (m7G2069) of 23S rRNA. The protein is Ribosomal RNA large subunit methyltransferase K/L of Colwellia psychrerythraea (strain 34H / ATCC BAA-681) (Vibrio psychroerythus).